Reading from the N-terminus, the 211-residue chain is Cytidylate kinase (211 aa).

Residue 7–15 coordinates ATP; sequence GPAASGKGT.

Belongs to the cytidylate kinase family. Type 1 subfamily.

It localises to the cytoplasm. It carries out the reaction CMP + ATP = CDP + ADP. The catalysed reaction is dCMP + ATP = dCDP + ADP. The polypeptide is Cytidylate kinase (Rhodopseudomonas palustris (strain BisA53)).